A 106-amino-acid chain; its full sequence is uncharacterized protein (106 aa).

A run of 2 helical transmembrane segments spans residues 10 to 30 (VYIQ…VAFV) and 65 to 85 (LDFA…LLAY).

It is found in the membrane. This is an uncharacterized protein from Saccharomyces cerevisiae (strain ATCC 204508 / S288c) (Baker's yeast).